We begin with the raw amino-acid sequence, 254 residues long: MKETSVLTIQNLKACVNEFEVLHNINLQIKTNETHVIMGPNGSGKSSLLKVIAGHPSYKVIEGKIFVENIDITQATPEERSNLGVFLGFQYPIEITGVNNADFLRAVYNQKRKKQGLKDLDPLEFLEILSPILDLVSMDQTFLHRNLNEGFSGGEKKRNEILQMILSKPRLAILDEPDSGLDIDALRSISEVINKLRNQKQCMLIITHYQNLLDYVIPDKVHIMDHGKIVETGDVTLAIQLKRKGYKWIKQSTN.

The region spanning 7 to 251 is the ABC transporter domain; sequence LTIQNLKACV…KRKGYKWIKQ (245 aa). An ATP-binding site is contributed by 39–46; it reads GPNGSGKS.

Belongs to the ABC transporter superfamily. Ycf16 family.

It is found in the plastid. The protein localises to the chloroplast. This is Probable ATP-dependent transporter ycf16 (ycf16) from Cyanidium caldarium (Red alga).